Reading from the N-terminus, the 406-residue chain is Methylthioribose-1-phosphate isomerase (406 aa).

Aspartate 277 acts as the Proton donor in catalysis.

The protein belongs to the eIF-2B alpha/beta/delta subunits family. MtnA subfamily.

It is found in the cytoplasm. It localises to the nucleus. It carries out the reaction 5-(methylsulfanyl)-alpha-D-ribose 1-phosphate = 5-(methylsulfanyl)-D-ribulose 1-phosphate. It functions in the pathway amino-acid biosynthesis; L-methionine biosynthesis via salvage pathway; L-methionine from S-methyl-5-thio-alpha-D-ribose 1-phosphate: step 1/6. Catalyzes the interconversion of methylthioribose-1-phosphate (MTR-1-P) into methylthioribulose-1-phosphate (MTRu-1-P). This is Methylthioribose-1-phosphate isomerase from Debaryomyces hansenii (strain ATCC 36239 / CBS 767 / BCRC 21394 / JCM 1990 / NBRC 0083 / IGC 2968) (Yeast).